We begin with the raw amino-acid sequence, 309 residues long: Probable manganese-dependent inorganic pyrophosphatase (309 aa).

Mn(2+)-binding residues include H9, D13, D15, D75, H97, and D149.

It belongs to the PPase class C family. Mn(2+) serves as cofactor.

The protein localises to the cytoplasm. The enzyme catalyses diphosphate + H2O = 2 phosphate + H(+). The chain is Probable manganese-dependent inorganic pyrophosphatase from Bacillus mycoides (strain KBAB4) (Bacillus weihenstephanensis).